Reading from the N-terminus, the 546-residue chain is CTP synthase (546 aa).

Positions 1–269 (MRSKKTKFIF…DERLAEVLNI (269 aa)) are amidoligase domain. CTP is bound at residue S17. S17 is a binding site for UTP. ATP-binding positions include 18–23 (SLGKGL) and D75. The Mg(2+) site is built by D75 and E143. CTP contacts are provided by residues 150 to 152 (DIE), 190 to 195 (KTKPTQ), and K226. UTP contacts are provided by residues 190-195 (KTKPTQ) and K226. Residues 295–537 (RIAIVGKYVN…IRAALAQRDA (243 aa)) form the Glutamine amidotransferase type-1 domain. G357 is an L-glutamine binding site. The Nucleophile; for glutamine hydrolysis role is filled by C384. L-glutamine-binding positions include 385–388 (LGLQ), E408, and R465. Catalysis depends on residues H510 and E512.

Belongs to the CTP synthase family. In terms of assembly, homotetramer.

The enzyme catalyses UTP + L-glutamine + ATP + H2O = CTP + L-glutamate + ADP + phosphate + 2 H(+). It carries out the reaction L-glutamine + H2O = L-glutamate + NH4(+). The catalysed reaction is UTP + NH4(+) + ATP = CTP + ADP + phosphate + 2 H(+). It functions in the pathway pyrimidine metabolism; CTP biosynthesis via de novo pathway; CTP from UDP: step 2/2. Allosterically activated by GTP, when glutamine is the substrate; GTP has no effect on the reaction when ammonia is the substrate. The allosteric effector GTP functions by stabilizing the protein conformation that binds the tetrahedral intermediate(s) formed during glutamine hydrolysis. Inhibited by the product CTP, via allosteric rather than competitive inhibition. In terms of biological role, catalyzes the ATP-dependent amination of UTP to CTP with either L-glutamine or ammonia as the source of nitrogen. Regulates intracellular CTP levels through interactions with the four ribonucleotide triphosphates. This Myxococcus xanthus (strain DK1622) protein is CTP synthase.